We begin with the raw amino-acid sequence, 200 residues long: NADH-quinone oxidoreductase subunit B 2 (200 aa).

[4Fe-4S] cluster-binding residues include Cys-79, Cys-80, Cys-144, and Cys-174.

This sequence belongs to the complex I 20 kDa subunit family. As to quaternary structure, NDH-1 is composed of 14 different subunits. Subunits NuoB, C, D, E, F, and G constitute the peripheral sector of the complex. [4Fe-4S] cluster is required as a cofactor.

It is found in the cell inner membrane. It carries out the reaction a quinone + NADH + 5 H(+)(in) = a quinol + NAD(+) + 4 H(+)(out). Functionally, NDH-1 shuttles electrons from NADH, via FMN and iron-sulfur (Fe-S) centers, to quinones in the respiratory chain. The immediate electron acceptor for the enzyme in this species is believed to be ubiquinone. Couples the redox reaction to proton translocation (for every two electrons transferred, four hydrogen ions are translocated across the cytoplasmic membrane), and thus conserves the redox energy in a proton gradient. In Rhodopseudomonas palustris (strain BisA53), this protein is NADH-quinone oxidoreductase subunit B 2.